The chain runs to 393 residues: tRNA-specific 2-thiouridylase MnmA (393 aa).

Residues Ala19 to Ser26 and Leu45 contribute to the ATP site. The active-site Nucleophile is Cys113. Cys113 and Cys210 are oxidised to a cystine. Position 137 (Gly137) interacts with ATP. The segment at Arg160–Gln162 is interaction with tRNA. Residue Cys210 is the Cysteine persulfide intermediate of the active site.

This sequence belongs to the MnmA/TRMU family.

The protein resides in the cytoplasm. The catalysed reaction is S-sulfanyl-L-cysteinyl-[protein] + uridine(34) in tRNA + AH2 + ATP = 2-thiouridine(34) in tRNA + L-cysteinyl-[protein] + A + AMP + diphosphate + H(+). Its function is as follows. Catalyzes the 2-thiolation of uridine at the wobble position (U34) of tRNA, leading to the formation of s(2)U34. The polypeptide is tRNA-specific 2-thiouridylase MnmA (Afipia carboxidovorans (strain ATCC 49405 / DSM 1227 / KCTC 32145 / OM5) (Oligotropha carboxidovorans)).